A 206-amino-acid polypeptide reads, in one-letter code: TPR repeat-containing protein YrrB (206 aa).

6 TPR repeats span residues Met1 to Asp23, Ala24 to Ala57, Thr59 to Asn91, Asp93 to Asp125, Glu127 to His159, and Ala160 to His193.

In terms of assembly, monomer.

In terms of biological role, could be an interacting mediator in the complex formation among RNA sulfuration components, RNA processing components, and aminoacyl-tRNA synthetases. This chain is TPR repeat-containing protein YrrB (yrrB), found in Bacillus subtilis (strain 168).